Here is a 116-residue protein sequence, read N- to C-terminus: Biogenesis of lysosome-related organelles complex 1 subunit CNL1 (116 aa).

Residues 63–95 (DIVDVNIQSFKDILSKCEELENYFTMLDQIEMI) adopt a coiled-coil conformation.

Belongs to the BLOC1S4 family. In terms of assembly, component of the biogenesis of lysosome-related organelles complex-1 (BLOC-1).

The protein resides in the cytoplasm. Functionally, component of the biogenesis of lysosome-related organelles complex-1 (BLOC-1), a complex that is involved in endosomal cargo sorting. The sequence is that of Biogenesis of lysosome-related organelles complex 1 subunit CNL1 (CLN1) from Vanderwaltozyma polyspora (strain ATCC 22028 / DSM 70294 / BCRC 21397 / CBS 2163 / NBRC 10782 / NRRL Y-8283 / UCD 57-17) (Kluyveromyces polysporus).